Consider the following 61-residue polypeptide: Small ribosomal subunit protein uS14 (61 aa).

Residues Cys-24, Cys-27, Cys-40, and Cys-43 each contribute to the Zn(2+) site.

This sequence belongs to the universal ribosomal protein uS14 family. Zinc-binding uS14 subfamily. In terms of assembly, part of the 30S ribosomal subunit. Contacts proteins S3 and S10. Zn(2+) serves as cofactor.

Its function is as follows. Binds 16S rRNA, required for the assembly of 30S particles and may also be responsible for determining the conformation of the 16S rRNA at the A site. This chain is Small ribosomal subunit protein uS14, found in Parafrankia sp. (strain EAN1pec).